Here is a 119-residue protein sequence, read N- to C-terminus: uncharacterized protein (119 aa).

To T.pallidum TP_0127, TP_0315 and TP_0619.

This is an uncharacterized protein from Treponema pallidum (strain Nichols).